We begin with the raw amino-acid sequence, 814 residues long: Protein kinase C-binding protein NELL2 (814 aa).

The first 19 residues, 1-19 (MEFILGIFCVLFCLRAGAG), serve as a signal peptide directing secretion. N-linked (GlcNAc...) asparagine glycans are attached at residues asparagine 51, asparagine 223, and asparagine 296. The region spanning 53 to 226 (SKAFLFQDTS…SQCPDLNRTC (174 aa)) is the Laminin G-like domain. The VWFC 1 domain occupies 270–329 (RSCTVKGNIYRELESWMDGCKKCTCTNGTAQCETLTCSAPNCLSGFSPAYVPGKCCKECQ). The region spanning 395–437 (GHDFCSEGHNCMGYSICKNLDDKAVCICRDGFRALREDNAYCE) is the EGF-like 1 domain. 3 disulfides stabilise this stretch: cysteine 399–cysteine 411, cysteine 405–cysteine 420, and cysteine 422–cysteine 436. Aspartate 438, isoleucine 439, and glutamate 441 together coordinate Ca(2+). In terms of domain architecture, EGF-like 2; calcium-binding spans 438 to 479 (DIDECTEGRHYCRENTVCVNTPGSFMCVCQTGYLKIDDYSCT). 9 cysteine pairs are disulfide-bonded: cysteine 442–cysteine 455, cysteine 449–cysteine 464, cysteine 466–cysteine 478, cysteine 484–cysteine 497, cysteine 491–cysteine 506, cysteine 508–cysteine 519, cysteine 523–cysteine 533, cysteine 527–cysteine 539, and cysteine 541–cysteine 550. Residues asparagine 457, threonine 458, and serine 461 each contribute to the Ca(2+) site. Residues 480-520 (EHNECATNQHSCDENAMCFNTVGGHNCVCQPGYTGNGTDCR) form the EGF-like 3; calcium-binding domain. Asparagine 515 carries N-linked (GlcNAc...) asparagine glycosylation. The EGF-like 4 domain maps to 521–551 (AFCKDGCRNGGTCIAPNICACPQGFTGPSCE). Residues aspartate 553, isoleucine 554, and glutamate 556 each coordinate Ca(2+). The EGF-like 5; calcium-binding domain maps to 553–599 (DIDECTEGFVQCDSRANCINLPGWYHCECRDGYHDNGMFSLGGESCE). 3 disulfides stabilise this stretch: cysteine 557-cysteine 570, cysteine 564-cysteine 579, and cysteine 581-cysteine 598. Ca(2+) is bound by residues asparagine 572, leucine 573, and tryptophan 576. Ca(2+) contacts are provided by aspartate 600, isoleucine 601, and glutamate 603. Positions 600 to 635 (DIDECATGRHSCSNDTVCFNLDGGFDCRCPHGKNCS) constitute an EGF-like 6; calcium-binding domain. 3 disulfide bridges follow: cysteine 604-cysteine 617, cysteine 611-cysteine 626, and cysteine 628-cysteine 634. Asparagine 613 carries an N-linked (GlcNAc...) asparagine glycan. Residues asparagine 619, leucine 620, and glycine 623 each contribute to the Ca(2+) site. Residue asparagine 633 is glycosylated (N-linked (GlcNAc...) asparagine). 2 consecutive VWFC domains span residues 636–691 (GDCT…PECD) and 696–754 (SQCL…PRCV).

As to quaternary structure, homotrimer.

It localises to the secreted. Functionally, may regulate neuronal differentiation, polarization and axon guidance. The chain is Protein kinase C-binding protein NELL2 (nell2.L) from Xenopus laevis (African clawed frog).